The primary structure comprises 162 residues: MIRALFSLFRSLHANTHPADLAHAAALALALALLPRSSLLWYLLFAVCFFIRLNRGLLLLSLVLFGFVVPSFDPWLDSLGNWALCLPRLQPVYRALIEIPFVGLARFYNTMIAGGLVAGALCYLPCYALARCAVTAYRTYLYPKIHHATIFFLVRNAPLCKR.

The next 3 helical transmembrane spans lie at 28 to 50 (ALAL…VCFF), 57 to 76 (LLLL…DPWL), and 108 to 130 (YNTM…YALA).

It is found in the cell membrane. This is an uncharacterized protein from Treponema pallidum (strain Nichols).